The following is a 429-amino-acid chain: MINDASSAAFERAQALLPGGVNSPVRAFRGVGGVPRFIDHGAGAYLYDIDGNQYIDYVLSWGPLILGHAYPAVVEAICAQAQRGTSFGAPTELESELAELVIAAVPSVEMVRFVSSGTEAAMSAIRLARAYTQREKIIKFEGCYHGHADPFLVQAGSGVATLGLPDSPGVLKSATSNTLTAPFNDLEAVEALFKANAGQVAALVIEPVAGNMGFVLPREGYLAGLRQLCDQYGALLIFDEVMTGFRVAYGGAQAYFNVMPDLTCLGKVVGGGLPAAAYGGRREIMQMVAPAGTMYQAGTLSGNPLAMVAGIVTLREIAKPEVFERLTGVTSTLCQGFWKAAFKNGIPFQAHKAGSMWGFFFAGDEVYDFTSAKRADTAMFGKFFHAMLEQGVYLAPSQFEAAFVSTAHTDELVAQTINAAQAAFASIRS.

N6-(pyridoxal phosphate)lysine is present on K267.

Belongs to the class-III pyridoxal-phosphate-dependent aminotransferase family. HemL subfamily. Homodimer. Pyridoxal 5'-phosphate is required as a cofactor.

The protein localises to the cytoplasm. It catalyses the reaction (S)-4-amino-5-oxopentanoate = 5-aminolevulinate. It participates in porphyrin-containing compound metabolism; protoporphyrin-IX biosynthesis; 5-aminolevulinate from L-glutamyl-tRNA(Glu): step 2/2. This Herpetosiphon aurantiacus (strain ATCC 23779 / DSM 785 / 114-95) protein is Glutamate-1-semialdehyde 2,1-aminomutase.